Consider the following 950-residue polypeptide: RNA polymerase-associated protein RapA (950 aa).

The Helicase ATP-binding domain maps to Glu165–Asn333. Asp178–Thr185 contributes to the ATP binding site. The DEAH box motif lies at Asp279–His282. The 155-residue stretch at Arg475–His629 folds into the Helicase C-terminal domain.

The protein belongs to the SNF2/RAD54 helicase family. RapA subfamily. As to quaternary structure, interacts with the RNAP. Has a higher affinity for the core RNAP than for the holoenzyme. Its ATPase activity is stimulated by binding to RNAP.

Functionally, transcription regulator that activates transcription by stimulating RNA polymerase (RNAP) recycling in case of stress conditions such as supercoiled DNA or high salt concentrations. Probably acts by releasing the RNAP, when it is trapped or immobilized on tightly supercoiled DNA. Does not activate transcription on linear DNA. Probably not involved in DNA repair. The protein is RNA polymerase-associated protein RapA of Pseudomonas aeruginosa (strain LESB58).